The sequence spans 81 residues: CLAVATA3/ESR (CLE)-related protein 5 (81 aa).

An N-terminal signal peptide occupies residues 1–26 (MATLILKQTLIILLIIFSLQTLSSQA). Proline 73 and proline 76 each carry hydroxyproline. O-linked (Ara...) hydroxyproline glycosylation is present at proline 76.

Belongs to the CLV3/ESR signal peptide family. The O-glycosylation (arabinosylation) of the hydroxyproline Pro-76 enhances binding affinity of the CLE5p peptide for its receptor. Mostly expressed in roots, and, to a lower extent, in seedlings, stems, apex, flowers and siliques.

It is found in the secreted. The protein resides in the extracellular space. Its function is as follows. Extracellular signal peptide that regulates cell fate. The sequence is that of CLAVATA3/ESR (CLE)-related protein 5 from Arabidopsis thaliana (Mouse-ear cress).